The following is a 122-amino-acid chain: Large ribosomal subunit protein uL14 (122 aa).

This sequence belongs to the universal ribosomal protein uL14 family. Part of the 50S ribosomal subunit. Forms a cluster with proteins L3 and L19. In the 70S ribosome, L14 and L19 interact and together make contacts with the 16S rRNA in bridges B5 and B8.

Its function is as follows. Binds to 23S rRNA. Forms part of two intersubunit bridges in the 70S ribosome. In Shewanella woodyi (strain ATCC 51908 / MS32), this protein is Large ribosomal subunit protein uL14.